A 132-amino-acid polypeptide reads, in one-letter code: Small ribosomal subunit protein uS8 (132 aa).

It belongs to the universal ribosomal protein uS8 family. As to quaternary structure, part of the 30S ribosomal subunit. Contacts proteins S5 and S12.

Its function is as follows. One of the primary rRNA binding proteins, it binds directly to 16S rRNA central domain where it helps coordinate assembly of the platform of the 30S subunit. This chain is Small ribosomal subunit protein uS8, found in Lactobacillus acidophilus (strain ATCC 700396 / NCK56 / N2 / NCFM).